The following is a 251-amino-acid chain: tRNA (guanine-N(1)-)-methyltransferase (251 aa).

Residues glycine 117 and 137–142 (IGDYVL) each bind S-adenosyl-L-methionine.

It belongs to the RNA methyltransferase TrmD family. Homodimer.

It localises to the cytoplasm. It catalyses the reaction guanosine(37) in tRNA + S-adenosyl-L-methionine = N(1)-methylguanosine(37) in tRNA + S-adenosyl-L-homocysteine + H(+). Its function is as follows. Specifically methylates guanosine-37 in various tRNAs. The chain is tRNA (guanine-N(1)-)-methyltransferase from Haemophilus ducreyi (strain 35000HP / ATCC 700724).